We begin with the raw amino-acid sequence, 496 residues long: Protein RepS (496 aa).

The DNA-binding element occupies 120 to 141; that stretch reads SDILTTAIDLGFMPTLIIKSDK.

Its function is as follows. Essential for replication. The polypeptide is Protein RepS (repS) (Streptococcus pyogenes).